We begin with the raw amino-acid sequence, 255 residues long: 5'-nucleotidase SurE (255 aa).

The a divalent metal cation site is built by D11, D12, S43, and N99.

It belongs to the SurE nucleotidase family. A divalent metal cation is required as a cofactor.

It localises to the cytoplasm. It carries out the reaction a ribonucleoside 5'-phosphate + H2O = a ribonucleoside + phosphate. In terms of biological role, nucleotidase that shows phosphatase activity on nucleoside 5'-monophosphates. In Caldanaerobacter subterraneus subsp. tengcongensis (strain DSM 15242 / JCM 11007 / NBRC 100824 / MB4) (Thermoanaerobacter tengcongensis), this protein is 5'-nucleotidase SurE.